We begin with the raw amino-acid sequence, 192 residues long: Rhomboid protease GlpG (192 aa).

Topologically, residues 1 to 10 (MKNFLAQQGK) are cytoplasmic. The chain crosses the membrane as a helical span at residues 11–31 (ITLILTALCVLIYLAQQLGFE). At 32 to 57 (DDIMYLMHYPAYEEQDSEVWRYISHT) the chain is on the periplasmic side. The chain crosses the membrane as a helical span at residues 58–78 (LVHLSNLHILFNLSWFFIFGG). At 79-82 (MIER) the chain is on the cytoplasmic side. Residues 83 to 103 (TFGSVKLLMLYVVASAITGYV) form a helical membrane-spanning segment. Residues 104 to 107 (QNYV) lie on the Periplasmic side of the membrane. A helical membrane pass occupies residues 108–128 (SGPAFFGLSGVVYAVLGYVFI). Ser116 functions as the Nucleophile in the catalytic mechanism. Over 129–141 (RDKLNHHLFDLPE) the chain is Cytoplasmic. A helical transmembrane segment spans residues 142–162 (GFFTMLLVGIALGFISPLFGV). A topological domain (periplasmic) is located at residue Glu163. The helical transmembrane segment at 164-184 (MGNAAHISGLIVGLIWGFIDS) threads the bilayer. Residue His169 is part of the active site. Topologically, residues 185–192 (KLRKNSLE) are cytoplasmic.

This sequence belongs to the peptidase S54 family.

It is found in the cell inner membrane. The catalysed reaction is Cleaves type-1 transmembrane domains using a catalytic dyad composed of serine and histidine that are contributed by different transmembrane domains.. Functionally, rhomboid-type serine protease that catalyzes intramembrane proteolysis. This chain is Rhomboid protease GlpG (glpG), found in Haemophilus influenzae (strain ATCC 51907 / DSM 11121 / KW20 / Rd).